Reading from the N-terminus, the 757-residue chain is RNA-directed RNA polymerase catalytic subunit (757 aa).

A disordered region spans residues 54-77 (KWTTNTETGAAQLNPIDGPLPEDN). Residues 55–64 (WTTNTETGAA) show a composition bias toward polar residues. 2 short sequence motifs (nuclear localization signal) span residues 187–195 (RKRRVRDNM) and 203–216 (RTIG…NKRS). The segment at 249–256 (RGFVYFVE) is promoter-binding site. The RdRp catalytic domain occupies 286–483 (VRKMMTNSQD…GINMSKKKSY (198 aa)).

It belongs to the influenza viruses polymerase PB1 family. In terms of assembly, influenza RNA polymerase is composed of three subunits: PB1, PB2 and PA. Interacts (via N-terminus) with PA (via C-terminus). Interacts (via C-terminus) with PB2 (via N-terminus); this interaction is essential for transcription initiation. In terms of processing, phosphorylated by host PRKCA.

The protein resides in the host nucleus. It localises to the host cytoplasm. It catalyses the reaction RNA(n) + a ribonucleoside 5'-triphosphate = RNA(n+1) + diphosphate. Its function is as follows. RNA-dependent RNA polymerase which is responsible for replication and transcription of virus RNA segments. The transcription of viral mRNAs occurs by a unique mechanism called cap-snatching. 5' methylated caps of cellular mRNAs are cleaved after 10-13 nucleotides by PA. In turn, these short capped RNAs are used as primers by PB1 for transcription of viral mRNAs. During virus replication, PB1 initiates RNA synthesis and copy vRNA into complementary RNA (cRNA) which in turn serves as a template for the production of more vRNAs. The polypeptide is RNA-directed RNA polymerase catalytic subunit (Aves (whales)).